A 535-amino-acid chain; its full sequence is Sucrose transport protein SUT5 (535 aa).

The Cytoplasmic portion of the chain corresponds to 1-53 (MEEGRRGDREAKSAAGWTALSTTKTTLEEKRRLQANGSVGGDAGTSGFRRIVR). The helical transmembrane segment at 54-74 (LFFACMVAGGIQYGWALQLSL) threads the bilayer. The Extracellular segment spans residues 75–87 (LSPYSQTLGISHS). The chain crosses the membrane as a helical span at residues 88-108 (YVSLTWICGPIAGFVVQPIVG). Topologically, residues 109 to 122 (YYSDRCTMKMGRRR) are cytoplasmic. Residues 123 to 143 (PFILVGCLIICISVMIIGFSA) form a helical membrane-spanning segment. At 144 to 163 (DIGRHLGDTKEHCSTYTGPR) the chain is on the extracellular side. The chain crosses the membrane as a helical span at residues 164–184 (WSAAMVYIVGFWFLDFANNTV). Residues 185–203 (QGPARAMMADLSAGHHGPN) lie on the Cytoplasmic side of the membrane. A helical transmembrane segment spans residues 204–224 (VGQSIFSLWMAIGSVLGYLSG). At 225–249 (ANGKWHEWFPWLKTAACCDACANLK) the chain is on the extracellular side. The helical transmembrane segment at 250–270 (GAFFTAVLLIVVSMTVTMYLA) threads the bilayer. Residues 271 to 302 (DEMPLDKQDVDTSGGGGCAVFVDLFKSLRNLP) lie on the Cytoplasmic side of the membrane. The chain crosses the membrane as a helical span at residues 303–323 (PAMFKVLAVTAVTWLSWFPFI). The Extracellular portion of the chain corresponds to 324-354 (QYNTDWMGREIYHGEPQGTAAKADVYDAGVR). Residues 355-375 (EGAMGLLFCSVALGVTSFVIP) form a helical membrane-spanning segment. Topologically, residues 376 to 384 (KLCRRLTSK) are cytoplasmic. A helical transmembrane segment spans residues 385-405 (VVWSISNFLVFALMAVMVAVG). The Extracellular portion of the chain corresponds to 406 to 429 (MVSMRGYRPSLAAGLTGPDPTLKA). Residues 430–450 (VALVVFALIGIPQAVLFSVPW) form a helical membrane-spanning segment. Topologically, residues 451-465 (AVASEVTAEEGGGQG) are cytoplasmic. Residues 466-486 (LAIGVLNIAIVVPQLVIALTA) traverse the membrane as a helical segment. Residues 487–498 (GPIDGAFNKGNT) lie on the Extracellular side of the membrane. A helical transmembrane segment spans residues 499–519 (PAFGIGGAFAFICGVLALIWL). Over 520–535 (PKTRGVSNAAVVAGGH) the chain is Cytoplasmic.

The protein belongs to the glycoside-pentoside-hexuronide (GPH) cation symporter transporter (TC 2.A.2.4) family. In terms of assembly, homodimer.

The protein localises to the cell membrane. The protein operates within glycan biosynthesis; sucrose metabolism. Functionally, responsible for the transport of sucrose into the cell, with the concomitant uptake of protons (symport system). May also transport other glucosides. The protein is Sucrose transport protein SUT5 (SUT5) of Oryza sativa subsp. indica (Rice).